A 623-amino-acid polypeptide reads, in one-letter code: Protein vein (623 aa).

The first 40 residues, 1–40 (MYAQHLRKWSLKTKKQLMPLILLIISYMLLLNTCVLSSSA), serve as a signal peptide directing secretion. Disordered regions lie at residues 70–98 (IPLS…SSNN), 130–162 (DAGS…SMQK), 184–214 (AASS…NYSS), and 229–317 (PESM…QRYN). 2 stretches are compositionally biased toward low complexity: residues 72–98 (LSSD…SSNN) and 136–158 (PAQQ…QQQQ). The N-linked (GlcNAc...) asparagine glycan is linked to asparagine 76. An N-linked (GlcNAc...) asparagine glycan is attached at asparagine 211. The segment covering 233 to 248 (LEDRSPEQAARSRRDG) has biased composition (basic and acidic residues). N-linked (GlcNAc...) asparagine glycosylation is present at asparagine 252. The segment covering 255-267 (RQQQRTGHRQQLQ) has biased composition (low complexity). The span at 305–316 (QRRKHQRKHQRY) shows a compositional bias: basic residues. N-linked (GlcNAc...) asparagine glycans are attached at residues asparagine 350, asparagine 381, asparagine 424, asparagine 449, asparagine 521, and asparagine 574. Positions 457–542 (TKIFSKPSKA…AKNKASKAIA (86 aa)) constitute an Ig-like C2-type domain. 4 disulfides stabilise this stretch: cysteine 478–cysteine 531, cysteine 566–cysteine 577, cysteine 571–cysteine 588, and cysteine 590–cysteine 599. The 39-residue stretch at 561 to 599 (ASGIPCNFDYCFHNGTCRMIPDINEVYCRCPTEYFGNRC) folds into the EGF-like domain.

It is found in the secreted. In terms of biological role, ligand for the EGF receptor. Seems to play a role in the global proliferation of wing disc cells and the larval patterning. Shows a strong synergistic genetic interaction with spi, suggesting a molecular interdependence. Required for the development of interveins cells. The polypeptide is Protein vein (vn) (Drosophila melanogaster (Fruit fly)).